A 319-amino-acid chain; its full sequence is tRNA-cytidine(32) 2-sulfurtransferase (319 aa).

The PP-loop motif motif lies at 43–48 (SGGKDS). [4Fe-4S] cluster-binding residues include Cys118, Cys121, and Cys209.

The protein belongs to the TtcA family. In terms of assembly, homodimer. Mg(2+) serves as cofactor. [4Fe-4S] cluster is required as a cofactor.

It localises to the cytoplasm. The enzyme catalyses cytidine(32) in tRNA + S-sulfanyl-L-cysteinyl-[cysteine desulfurase] + AH2 + ATP = 2-thiocytidine(32) in tRNA + L-cysteinyl-[cysteine desulfurase] + A + AMP + diphosphate + H(+). Its pathway is tRNA modification. Its function is as follows. Catalyzes the ATP-dependent 2-thiolation of cytidine in position 32 of tRNA, to form 2-thiocytidine (s(2)C32). The sulfur atoms are provided by the cysteine/cysteine desulfurase (IscS) system. In Neisseria gonorrhoeae (strain NCCP11945), this protein is tRNA-cytidine(32) 2-sulfurtransferase.